A 319-amino-acid polypeptide reads, in one-letter code: Acetyl-coenzyme A carboxylase carboxyl transferase subunit alpha (319 aa).

Positions 43–296 constitute a CoA carboxyltransferase C-terminal domain; that stretch reads LKQKSVELTQ…KTQLLLDLVE (254 aa).

The protein belongs to the AccA family. As to quaternary structure, acetyl-CoA carboxylase is a heterohexamer composed of biotin carboxyl carrier protein (AccB), biotin carboxylase (AccC) and two subunits each of ACCase subunit alpha (AccA) and ACCase subunit beta (AccD).

It is found in the cytoplasm. The enzyme catalyses N(6)-carboxybiotinyl-L-lysyl-[protein] + acetyl-CoA = N(6)-biotinyl-L-lysyl-[protein] + malonyl-CoA. It participates in lipid metabolism; malonyl-CoA biosynthesis; malonyl-CoA from acetyl-CoA: step 1/1. Functionally, component of the acetyl coenzyme A carboxylase (ACC) complex. First, biotin carboxylase catalyzes the carboxylation of biotin on its carrier protein (BCCP) and then the CO(2) group is transferred by the carboxyltransferase to acetyl-CoA to form malonyl-CoA. The protein is Acetyl-coenzyme A carboxylase carboxyl transferase subunit alpha of Blochmanniella floridana.